Consider the following 423-residue polypeptide: Serine hydroxymethyltransferase (423 aa).

Residues L126 and 130 to 132 (GHL) contribute to the (6S)-5,6,7,8-tetrahydrofolate site. N6-(pyridoxal phosphate)lysine is present on K235.

It belongs to the SHMT family. As to quaternary structure, homodimer. The cofactor is pyridoxal 5'-phosphate.

It localises to the cytoplasm. It catalyses the reaction (6R)-5,10-methylene-5,6,7,8-tetrahydrofolate + glycine + H2O = (6S)-5,6,7,8-tetrahydrofolate + L-serine. Its pathway is one-carbon metabolism; tetrahydrofolate interconversion. It participates in amino-acid biosynthesis; glycine biosynthesis; glycine from L-serine: step 1/1. In terms of biological role, catalyzes the reversible interconversion of serine and glycine with tetrahydrofolate (THF) serving as the one-carbon carrier. This reaction serves as the major source of one-carbon groups required for the biosynthesis of purines, thymidylate, methionine, and other important biomolecules. Also exhibits THF-independent aldolase activity toward beta-hydroxyamino acids, producing glycine and aldehydes, via a retro-aldol mechanism. This chain is Serine hydroxymethyltransferase, found in Sorangium cellulosum (strain So ce56) (Polyangium cellulosum (strain So ce56)).